The primary structure comprises 99 residues: Aspartyl/glutamyl-tRNA(Asn/Gln) amidotransferase subunit C (99 aa).

It belongs to the GatC family. As to quaternary structure, heterotrimer of A, B and C subunits.

It carries out the reaction L-glutamyl-tRNA(Gln) + L-glutamine + ATP + H2O = L-glutaminyl-tRNA(Gln) + L-glutamate + ADP + phosphate + H(+). It catalyses the reaction L-aspartyl-tRNA(Asn) + L-glutamine + ATP + H2O = L-asparaginyl-tRNA(Asn) + L-glutamate + ADP + phosphate + 2 H(+). Its function is as follows. Allows the formation of correctly charged Asn-tRNA(Asn) or Gln-tRNA(Gln) through the transamidation of misacylated Asp-tRNA(Asn) or Glu-tRNA(Gln) in organisms which lack either or both of asparaginyl-tRNA or glutaminyl-tRNA synthetases. The reaction takes place in the presence of glutamine and ATP through an activated phospho-Asp-tRNA(Asn) or phospho-Glu-tRNA(Gln). This Mycobacterium leprae (strain Br4923) protein is Aspartyl/glutamyl-tRNA(Asn/Gln) amidotransferase subunit C.